Consider the following 780-residue polypeptide: MESIKVCMNALCGAASTSGEWKKGWPMRSGDLASLCDKCGCAYEQSIFCEVFHAKESGWRECNSCDKRLHCGCIASRFMMELLENGGVTCISCAKKSGLISMNVSHESNGKDFPSFASAEHVGSVLERTNLKHLLHFQRIDPTHSSLQMKQEESLLPSSLDALRHKTERKELSAQPNLSISLGPTLMTSPFHDAAVDDRSKTNSIFQLAPRSRQLLPKPANSAPIAAGMEPSGSLVSQIHVARPPPEGRGKTQLLPRYWPRITDQELLQLSGQYPHLSNSKIIPLFEKVLSASDAGRIGRLVLPKACAEAYFPPISLPEGLPLKIQDIKGKEWVFQFRFWPNNNSRMYVLEGVTPCIQSMQLQAGDTVTFSRTEPEGKLVMGYRKATNSTATQMFKGSSEPNLNMFSNSLNPGCGDINWSKLEKSEDMAKDNLFLQSSLTSARKRVRNIGTKSKRLLIDSVDVLELKITWEEAQELLRPPQSTKPSIFTLENQDFEEYDEPPVFGKRTLFVSRQTGEQEQWVQCDACGKWRQLPVDILLPPKWSCSDNLLDPGRSSCSAPDELSPREQDTLVRQSKEFKRRRLASSNEKLNQSQDASALNSLGNAGITTTGEQGEITVAATTKHPRHRAGCSCIVCSQPPSGKGKHKPSCTCTVCEAVKRRFRTLMLRKRNKGEAGQASQQAQSQSECRDETEVESIPAVELAAGENIDLNSDPGASRVSMMRLLQAAAFPLEAYLKQKAISNTAGEQQSSDMVSTEHGSSSAAQETEKDTTNGAHDPVN.

Residues 286–387 constitute a DNA-binding region (TF-B3); sequence FEKVLSASDA…KLVMGYRKAT (102 aa). A CW-type zinc finger spans residues 515-565; that stretch reads TGEQEQWVQCDACGKWRQLPVDILLPPKWSCSDNLLDPGRSSCSAPDELSP. C524, C527, C545, and C557 together coordinate Zn(2+). Disordered regions lie at residues 577–608, 669–695, and 743–780; these read EFKRRRLASSNEKLNQSQDASALNSLGNAGIT, KRNKGEAGQASQQAQSQSECRDETEVE, and NTAGEQQSSDMVSTEHGSSSAAQETEKDTTNGAHDPVN. The span at 584 to 603 shows a compositional bias: polar residues; it reads ASSNEKLNQSQDASALNSLG. Over residues 674-686 the composition is skewed to low complexity; the sequence is EAGQASQQAQSQS. The span at 743–765 shows a compositional bias: polar residues; sequence NTAGEQQSSDMVSTEHGSSSAAQ.

Its subcellular location is the nucleus. In terms of biological role, transcriptional repressor of gene expression involved in embryonic pathways, such as LEC1, ABI3, and FUS3. Repressor of the sugar-inducible genes involved in the seed maturation program in seedlings. Plays an essential role in regulating the transition from seed maturation to seedling growth. Functionally redundant with VAL1/HSI2. The polypeptide is B3 domain-containing transcription repressor VAL2 (VAL2) (Arabidopsis thaliana (Mouse-ear cress)).